The chain runs to 119 residues: Holo-[acyl-carrier-protein] synthase (119 aa).

Residues Asp-8 and Glu-60 each coordinate Mg(2+).

This sequence belongs to the P-Pant transferase superfamily. AcpS family. Requires Mg(2+) as cofactor.

The protein localises to the cytoplasm. It carries out the reaction apo-[ACP] + CoA = holo-[ACP] + adenosine 3',5'-bisphosphate + H(+). Transfers the 4'-phosphopantetheine moiety from coenzyme A to a Ser of acyl-carrier-protein. The chain is Holo-[acyl-carrier-protein] synthase from Staphylococcus haemolyticus (strain JCSC1435).